Here is a 317-residue protein sequence, read N- to C-terminus: Retinol dehydrogenase 16 (317 aa).

33 to 57 (FITGCDSGFGNLLARQLDRRGMRVL) contacts NAD(+). Substrate is bound at residue Ser-164. Residue Tyr-176 is the Proton acceptor of the active site. A helical membrane pass occupies residues 289-308 (FFYLPMSYLPTFLVDALFYW).

It belongs to the short-chain dehydrogenases/reductases (SDR) family. In terms of assembly, homodimer. In terms of processing, not N-glycosylated. In terms of tissue distribution, liver &gt; kidney &gt; brain &gt; lung &gt; testis.

The protein localises to the microsome membrane. Its subcellular location is the endoplasmic reticulum membrane. The enzyme catalyses all-trans-retinol--[retinol-binding protein] + NAD(+) = all-trans-retinal--[retinol-binding protein] + NADH + H(+). It catalyses the reaction all-trans-retinol + NAD(+) = all-trans-retinal + NADH + H(+). It carries out the reaction 13-cis-retinol + NAD(+) = 13-cis-retinal + NADH + H(+). The catalysed reaction is 11-cis-retinol + NAD(+) = 11-cis-retinal + NADH + H(+). The enzyme catalyses 9-cis-retinol + NAD(+) = 9-cis-retinal + NADH + H(+). It catalyses the reaction 5alpha-androstane-3alpha,17beta-diol + NAD(+) = 17beta-hydroxy-5alpha-androstan-3-one + NADH + H(+). It carries out the reaction androsterone + NAD(+) = 5alpha-androstan-3,17-dione + NADH + H(+). It participates in cofactor metabolism; retinol metabolism. In terms of biological role, oxidoreductase with a preference for NAD. Oxidizes all-trans-retinol, 9-cis-retinol, 11-cis-retinol and 13-cis-retinol to the corresponding aldehydes. Has higher activity towards CRBP-bound retinol than with free retinol. Oxidizes 3-alpha-hydroxysteroids. Oxidizes androstanediol and androsterone to dihydrotestosterone and androstanedione. Can also catalyze the reverse reaction. In Rattus norvegicus (Rat), this protein is Retinol dehydrogenase 16.